The chain runs to 346 residues: Oxidoreductase calI (346 aa).

The segment at 11–33 (VSTPQGRGDGRPTADQVLRDQDP) is disordered. Residues 18–32 (GDGRPTADQVLRDQD) are compositionally biased toward basic and acidic residues. 4 residues coordinate NADP(+): L52, K76, D100, and N128. The Proton donor role is filled by S181. Y208, K212, and I241 together coordinate NADP(+). The active-site Proton acceptor is Y208. K212 acts as the Lowers pKa of active site Tyr in catalysis.

It belongs to the short-chain dehydrogenases/reductases (SDR) family.

The protein operates within secondary metabolite biosynthesis. In terms of biological role, oxidoreductase; part of the gene cluster that mediates the biosynthesis of calbistrin A and related compounds. Calbistrin A is a secondary metabolite with an interesting structure that was recently found to have bioactivity against leukemia cells. It consists of two polyketides linked by an ester bond: a bicyclic decalin containing polyketide and a linear 12 carbon dioic acid structure. The polyketide synthase calA is probably responsible for forming the decalin moiety. Because calA lacks a designated enoylreductase (ER) domain, the required activity is provided by the trans-enoyl reductase calK. Following release from the PKS, calF then probably catalyzes the oxidation and the subsequent Diels Alder cycloisomerization that lead to the formation of the decalin moiety. The decalin polyketide backbone includes two C-methyl groups, at C7 and C11 in backbone, of which the C7 position is probably methylated by the methyltransferase domain of calA. A candidate for adding the methyl group at C11, if not done by CalA, is the cluster methyltransferase calH. Several additional tailoring enzymes within the cluster could be involved in the modification of the decalin polyketide product. Those include the 3 cytochrome P450 monooxygenases CalE, CalG and CalL, of which one might be responsible for the introduction of the extra hydroxyl group attached to the backbone of the decalin moiety, at position C9 in the backbone, that allows for attachment of the linear moiety. One tailoring enzyme activity that is expected to be involved in biosynthesis of calbistrin is an acyltransferase for connecting the two polyketide synthase products, and which could be performed by the cluster acyltransferase calJ. The enzyme responsible for the biosynthesis of the linear moiety, probably a second PKS, has not been identified yet. The protein is Oxidoreductase calI of Penicillium decumbens.